A 200-amino-acid chain; its full sequence is Bombinin-like peptides 3 (200 aa).

Positions 1 to 16 form a signal peptide, or 18; sequence MNFKYIVAVSILIASA. Residues phenylalanine 68 and phenylalanine 129 each carry the phenylalanine amide modification.

The protein belongs to the bombinin family. As to expression, expressed by the skin glands.

The protein localises to the secreted. Its function is as follows. Has antimicrobial activity, but no hemolytic activity. Preference on killing Gram-negative non-enteric bacteria. The protein is Bombinin-like peptides 3 of Bombina orientalis (Oriental fire-bellied toad).